We begin with the raw amino-acid sequence, 517 residues long: Ascochitine biosynthesis cluster MFS transporter (517 aa).

Basic and acidic residues predominate over residues 1–12; that stretch reads MSPDSRDPEAQR. The tract at residues 1–45 is disordered; it reads MSPDSRDPEAQRDVGLTKNTSSVNIPLESVKTDKTSNASPIMGPG. N-linked (GlcNAc...) asparagine glycosylation occurs at Asn19. The next 12 helical transmembrane spans lie at 75 to 95, 111 to 131, 141 to 161, 172 to 192, 204 to 224, 232 to 252, 308 to 328, 347 to 367, 390 to 410, 421 to 441, 457 to 475, and 485 to 505; these read WVITWLLSFLNVWVTFSSTIF, VVMTLGVSLTVLGFAVGPLIW, LTPFYFGYAVFCIFQIPVGVA, FFIGFFGTSAMAVTPGVLADI, VYAAAAFIGPIFGPIVGGFVV, WTAWITLILASAFGLAALVFV, ILLLVTLYISLVYGVLYLFFV, ALPLLAVMLGTLAGCLTILFV, LMMVGSVSLPIGLFWFGWTSS, AGFPIGIGLALIWVQGLSFLI, LIRSAVGAAFPLFGAPMYH, and LLGFLSVAMIPIPVAFYYYGP.

Belongs to the major facilitator superfamily. CAR1 family.

The protein localises to the membrane. In terms of biological role, MFS transporter; part of the gene cluster that mediates the biosynthesis the mycotoxin ascochitine, an o-quinone methide that plays a possible protective role against other microbial competitors in nature and is considered to be important for pathogenicity of legume-associated Didymella species. The polypeptide is Ascochitine biosynthesis cluster MFS transporter (Didymella fabae (Leaf and pod spot disease fungus)).